We begin with the raw amino-acid sequence, 310 residues long: tRNA-cytidine(32) 2-sulfurtransferase (310 aa).

The short motif at Ser45 to Ser50 is the PP-loop motif element. Residues Cys120, Cys123, and Cys211 each coordinate [4Fe-4S] cluster.

Belongs to the TtcA family. As to quaternary structure, homodimer. Mg(2+) serves as cofactor. The cofactor is [4Fe-4S] cluster.

Its subcellular location is the cytoplasm. The catalysed reaction is cytidine(32) in tRNA + S-sulfanyl-L-cysteinyl-[cysteine desulfurase] + AH2 + ATP = 2-thiocytidine(32) in tRNA + L-cysteinyl-[cysteine desulfurase] + A + AMP + diphosphate + H(+). It functions in the pathway tRNA modification. In terms of biological role, catalyzes the ATP-dependent 2-thiolation of cytidine in position 32 of tRNA, to form 2-thiocytidine (s(2)C32). The sulfur atoms are provided by the cysteine/cysteine desulfurase (IscS) system. In Shewanella baltica (strain OS195), this protein is tRNA-cytidine(32) 2-sulfurtransferase.